The chain runs to 315 residues: Methionyl-tRNA formyltransferase (315 aa).

113-116 (SLLP) is a (6S)-5,6,7,8-tetrahydrofolate binding site.

It belongs to the Fmt family.

It catalyses the reaction L-methionyl-tRNA(fMet) + (6R)-10-formyltetrahydrofolate = N-formyl-L-methionyl-tRNA(fMet) + (6S)-5,6,7,8-tetrahydrofolate + H(+). Attaches a formyl group to the free amino group of methionyl-tRNA(fMet). The formyl group appears to play a dual role in the initiator identity of N-formylmethionyl-tRNA by promoting its recognition by IF2 and preventing the misappropriation of this tRNA by the elongation apparatus. The protein is Methionyl-tRNA formyltransferase of Shigella dysenteriae serotype 1 (strain Sd197).